A 351-amino-acid chain; its full sequence is tRNA-specific 2-thiouridylase MnmA (351 aa).

Position 6-13 (6-13) interacts with ATP; the sequence is ALSGGTDS. The Nucleophile role is filled by Cys96. Cys96 and Cys193 form a disulfide bridge. Gly120 contributes to the ATP binding site. An interaction with tRNA region spans residues 143–145; that stretch reads KDQ. Catalysis depends on Cys193, which acts as the Cysteine persulfide intermediate. Residues 298–299 are interaction with tRNA; that stretch reads RY.

Belongs to the MnmA/TRMU family.

Its subcellular location is the cytoplasm. It carries out the reaction S-sulfanyl-L-cysteinyl-[protein] + uridine(34) in tRNA + AH2 + ATP = 2-thiouridine(34) in tRNA + L-cysteinyl-[protein] + A + AMP + diphosphate + H(+). In terms of biological role, catalyzes the 2-thiolation of uridine at the wobble position (U34) of tRNA, leading to the formation of s(2)U34. This chain is tRNA-specific 2-thiouridylase MnmA, found in Nitratidesulfovibrio vulgaris (strain DSM 19637 / Miyazaki F) (Desulfovibrio vulgaris).